The primary structure comprises 258 residues: MLAIISPAKTLDWESAVPNFTFSQPHLTAYSEKLINICRQLSPAQISSLMSISDKLAGLNVARFEQWQIEHNEQNSRAAIYAFKGDVYTGLEVETLSRDDIQFAQQHLRVLSGLYGVLRPLDLMQPYRLEMGTKLANEKGKDLYAFWGNIITDALQQAIEQQGDKILVNLASDEYYKSIQENQLGVKIIKPVFLDNKGGKYKVISFYAKKARGLMCRYIIQHRVTDIEQLKEFDLGGYQFNPSSSTQTEFVFKRDVIK.

The protein belongs to the UPF0246 family.

This Histophilus somni (strain 129Pt) (Haemophilus somnus) protein is UPF0246 protein HS_0482.